Reading from the N-terminus, the 597-residue chain is Elongation factor 4 (597 aa).

The region spanning 2–184 (NNIRNFSIIA…ALIAKVPPPK (183 aa)) is the tr-type G domain. GTP is bound by residues 14 to 19 (DHGKST) and 131 to 134 (NKID).

This sequence belongs to the TRAFAC class translation factor GTPase superfamily. Classic translation factor GTPase family. LepA subfamily.

It is found in the cell inner membrane. It carries out the reaction GTP + H2O = GDP + phosphate + H(+). In terms of biological role, required for accurate and efficient protein synthesis under certain stress conditions. May act as a fidelity factor of the translation reaction, by catalyzing a one-codon backward translocation of tRNAs on improperly translocated ribosomes. Back-translocation proceeds from a post-translocation (POST) complex to a pre-translocation (PRE) complex, thus giving elongation factor G a second chance to translocate the tRNAs correctly. Binds to ribosomes in a GTP-dependent manner. This is Elongation factor 4 from Herminiimonas arsenicoxydans.